A 280-amino-acid polypeptide reads, in one-letter code: 2-dehydro-3-deoxyphosphooctonate aldolase (280 aa).

Belongs to the KdsA family.

It is found in the cytoplasm. It catalyses the reaction D-arabinose 5-phosphate + phosphoenolpyruvate + H2O = 3-deoxy-alpha-D-manno-2-octulosonate-8-phosphate + phosphate. The protein operates within carbohydrate biosynthesis; 3-deoxy-D-manno-octulosonate biosynthesis; 3-deoxy-D-manno-octulosonate from D-ribulose 5-phosphate: step 2/3. It functions in the pathway bacterial outer membrane biogenesis; lipopolysaccharide biosynthesis. This Coxiella burnetii (strain Dugway 5J108-111) protein is 2-dehydro-3-deoxyphosphooctonate aldolase.